We begin with the raw amino-acid sequence, 333 residues long: Lipoyl synthase (333 aa).

A compositionally biased stretch (polar residues) spans 1-15 (MSTLVESPVPSNDSQ). Residues 1-34 (MSTLVESPVPSNDSQAAAPAAYDPTQKQKSQAKT) are disordered. [4Fe-4S] cluster-binding residues include cysteine 80, cysteine 85, cysteine 91, cysteine 106, cysteine 110, cysteine 113, and serine 320. The 219-residue stretch at 91 to 309 (CFGKGTATFM…EREAYAMGFT (219 aa)) folds into the Radical SAM core domain.

It belongs to the radical SAM superfamily. Lipoyl synthase family. [4Fe-4S] cluster is required as a cofactor.

The protein localises to the cytoplasm. It catalyses the reaction [[Fe-S] cluster scaffold protein carrying a second [4Fe-4S](2+) cluster] + N(6)-octanoyl-L-lysyl-[protein] + 2 oxidized [2Fe-2S]-[ferredoxin] + 2 S-adenosyl-L-methionine + 4 H(+) = [[Fe-S] cluster scaffold protein] + N(6)-[(R)-dihydrolipoyl]-L-lysyl-[protein] + 4 Fe(3+) + 2 hydrogen sulfide + 2 5'-deoxyadenosine + 2 L-methionine + 2 reduced [2Fe-2S]-[ferredoxin]. The protein operates within protein modification; protein lipoylation via endogenous pathway; protein N(6)-(lipoyl)lysine from octanoyl-[acyl-carrier-protein]: step 2/2. In terms of biological role, catalyzes the radical-mediated insertion of two sulfur atoms into the C-6 and C-8 positions of the octanoyl moiety bound to the lipoyl domains of lipoate-dependent enzymes, thereby converting the octanoylated domains into lipoylated derivatives. The protein is Lipoyl synthase of Bordetella bronchiseptica (strain ATCC BAA-588 / NCTC 13252 / RB50) (Alcaligenes bronchisepticus).